Here is a 333-residue protein sequence, read N- to C-terminus: Phosphate acyltransferase (333 aa).

The protein belongs to the PlsX family. As to quaternary structure, homodimer. Probably interacts with PlsY.

Its subcellular location is the cytoplasm. It carries out the reaction a fatty acyl-[ACP] + phosphate = an acyl phosphate + holo-[ACP]. Its pathway is lipid metabolism; phospholipid metabolism. In terms of biological role, catalyzes the reversible formation of acyl-phosphate (acyl-PO(4)) from acyl-[acyl-carrier-protein] (acyl-ACP). This enzyme utilizes acyl-ACP as fatty acyl donor, but not acyl-CoA. The protein is Phosphate acyltransferase of Ligilactobacillus salivarius (strain UCC118) (Lactobacillus salivarius).